We begin with the raw amino-acid sequence, 255 residues long: UPF0246 protein BVU_0413 (255 aa).

This sequence belongs to the UPF0246 family.

This is UPF0246 protein BVU_0413 from Phocaeicola vulgatus (strain ATCC 8482 / DSM 1447 / JCM 5826 / CCUG 4940 / NBRC 14291 / NCTC 11154) (Bacteroides vulgatus).